The sequence spans 212 residues: Large ribosomal subunit protein uL1 (212 aa).

Belongs to the universal ribosomal protein uL1 family. As to quaternary structure, part of the 50S ribosomal subunit.

Functionally, binds directly to 23S rRNA. Probably involved in E site tRNA release. In terms of biological role, protein L1 is also a translational repressor protein, it controls the translation of its operon by binding to its mRNA. The polypeptide is Large ribosomal subunit protein uL1 (Methanosphaera stadtmanae (strain ATCC 43021 / DSM 3091 / JCM 11832 / MCB-3)).